A 349-amino-acid polypeptide reads, in one-letter code: tRNA pseudouridine synthase D (349 aa).

Residue phenylalanine 27 participates in substrate binding. The active-site Nucleophile is aspartate 80. Substrate is bound at residue asparagine 129. The TRUD domain maps to 155–303 (GVPNYFGAQR…VEASRRAMLL (149 aa)). Position 329 (phenylalanine 329) interacts with substrate.

Belongs to the pseudouridine synthase TruD family.

It carries out the reaction uridine(13) in tRNA = pseudouridine(13) in tRNA. Functionally, responsible for synthesis of pseudouridine from uracil-13 in transfer RNAs. This Salmonella typhi protein is tRNA pseudouridine synthase D.